We begin with the raw amino-acid sequence, 89 residues long: Ribonuclease P protein component 1 (89 aa).

It belongs to the eukaryotic/archaeal RNase P protein component 1 family. As to quaternary structure, consists of a catalytic RNA component and at least 4-5 protein subunits.

It localises to the cytoplasm. It catalyses the reaction Endonucleolytic cleavage of RNA, removing 5'-extranucleotides from tRNA precursor.. Part of ribonuclease P, a protein complex that generates mature tRNA molecules by cleaving their 5'-ends. The sequence is that of Ribonuclease P protein component 1 from Thermoplasma volcanium (strain ATCC 51530 / DSM 4299 / JCM 9571 / NBRC 15438 / GSS1).